Reading from the N-terminus, the 381-residue chain is Succinyl-diaminopimelate desuccinylase (381 aa).

Histidine 68 serves as a coordination point for Zn(2+). Residue aspartate 70 is part of the active site. Aspartate 101 is a binding site for Zn(2+). Residue glutamate 135 is the Proton acceptor of the active site. Positions 136, 164, and 350 each coordinate Zn(2+).

This sequence belongs to the peptidase M20A family. DapE subfamily. Homodimer. Requires Zn(2+) as cofactor. Co(2+) serves as cofactor.

It catalyses the reaction N-succinyl-(2S,6S)-2,6-diaminopimelate + H2O = (2S,6S)-2,6-diaminopimelate + succinate. The protein operates within amino-acid biosynthesis; L-lysine biosynthesis via DAP pathway; LL-2,6-diaminopimelate from (S)-tetrahydrodipicolinate (succinylase route): step 3/3. In terms of biological role, catalyzes the hydrolysis of N-succinyl-L,L-diaminopimelic acid (SDAP), forming succinate and LL-2,6-diaminopimelate (DAP), an intermediate involved in the bacterial biosynthesis of lysine and meso-diaminopimelic acid, an essential component of bacterial cell walls. The polypeptide is Succinyl-diaminopimelate desuccinylase (Neisseria meningitidis serogroup C (strain 053442)).